The chain runs to 432 residues: Asparagine--tRNA ligase 2 (432 aa).

Belongs to the class-II aminoacyl-tRNA synthetase family. In terms of assembly, homodimer.

It localises to the cytoplasm. It catalyses the reaction tRNA(Asn) + L-asparagine + ATP = L-asparaginyl-tRNA(Asn) + AMP + diphosphate + H(+). The polypeptide is Asparagine--tRNA ligase 2 (asnS2) (Lactiplantibacillus plantarum (strain ATCC BAA-793 / NCIMB 8826 / WCFS1) (Lactobacillus plantarum)).